A 115-amino-acid chain; its full sequence is Large ribosomal subunit protein bL19 (115 aa).

It belongs to the bacterial ribosomal protein bL19 family.

This protein is located at the 30S-50S ribosomal subunit interface and may play a role in the structure and function of the aminoacyl-tRNA binding site. The sequence is that of Large ribosomal subunit protein bL19 from Buchnera aphidicola subsp. Acyrthosiphon pisum (strain 5A).